The sequence spans 82 residues: MKHPLETLLSAAGILLLALLSCLLLPAPSLGLTLAQKLVETFHMMDLNQLYTVLFCLWFLALGAIEYLVLRWVWRRWFSLER.

A run of 2 helical transmembrane segments spans residues 8 to 28 (LLSAAGILLLALLSCLLLPAP) and 50 to 70 (LYTVLFCLWFLALGAIEYLVL).

The protein localises to the cell membrane. This is an uncharacterized protein from Klebsiella pneumoniae.